Consider the following 477-residue polypeptide: UDP-N-acetylmuramate--L-alanine ligase (477 aa).

G122–T128 contributes to the ATP binding site.

This sequence belongs to the MurCDEF family.

It localises to the cytoplasm. The enzyme catalyses UDP-N-acetyl-alpha-D-muramate + L-alanine + ATP = UDP-N-acetyl-alpha-D-muramoyl-L-alanine + ADP + phosphate + H(+). Its pathway is cell wall biogenesis; peptidoglycan biosynthesis. Its function is as follows. Cell wall formation. This is UDP-N-acetylmuramate--L-alanine ligase from Xanthomonas euvesicatoria pv. vesicatoria (strain 85-10) (Xanthomonas campestris pv. vesicatoria).